The primary structure comprises 386 residues: Succinyl-diaminopimelate desuccinylase (386 aa).

His72 is a Zn(2+) binding site. Residue Asp74 is part of the active site. Residue Asp105 coordinates Zn(2+). Glu139 serves as the catalytic Proton acceptor. The Zn(2+) site is built by Glu140, Glu168, and His353.

Belongs to the peptidase M20A family. DapE subfamily. In terms of assembly, homodimer. Requires Zn(2+) as cofactor. Co(2+) is required as a cofactor.

The catalysed reaction is N-succinyl-(2S,6S)-2,6-diaminopimelate + H2O = (2S,6S)-2,6-diaminopimelate + succinate. It functions in the pathway amino-acid biosynthesis; L-lysine biosynthesis via DAP pathway; LL-2,6-diaminopimelate from (S)-tetrahydrodipicolinate (succinylase route): step 3/3. Catalyzes the hydrolysis of N-succinyl-L,L-diaminopimelic acid (SDAP), forming succinate and LL-2,6-diaminopimelate (DAP), an intermediate involved in the bacterial biosynthesis of lysine and meso-diaminopimelic acid, an essential component of bacterial cell walls. The chain is Succinyl-diaminopimelate desuccinylase from Rhodospirillum centenum (strain ATCC 51521 / SW).